Reading from the N-terminus, the 258-residue chain is 5'-nucleotidase SurE (258 aa).

Asp9, Asp10, Ser42, and Asn96 together coordinate a divalent metal cation.

This sequence belongs to the SurE nucleotidase family. A divalent metal cation serves as cofactor.

It is found in the cytoplasm. The catalysed reaction is a ribonucleoside 5'-phosphate + H2O = a ribonucleoside + phosphate. Nucleotidase that shows phosphatase activity on nucleoside 5'-monophosphates. This chain is 5'-nucleotidase SurE, found in Campylobacter jejuni subsp. jejuni serotype O:2 (strain ATCC 700819 / NCTC 11168).